Here is a 183-residue protein sequence, read N- to C-terminus: Inner membrane protein YgjV (183 aa).

Residues 1-2 are Periplasmic-facing; that stretch reads MT. A helical transmembrane segment spans residues 3–23; it reads AYWLAQGVGVIAFLIGITTFF. Over 24–38 the chain is Cytoplasmic; sequence NRDERRFKKQLSVYS. A helical transmembrane segment spans residues 39-59; sequence AVIGVHFFLLGTYPAGASAIL. Over 60-71 the chain is Periplasmic; the sequence is NAIRTLITLRTR. The next 2 membrane-spanning stretches (helical) occupy residues 72-92 and 93-113; these read SLWVMAIFIVLTGGIGLAKFH and HPVELLPVIGTIVSTWALFCC. The Periplasmic segment spans residues 114–133; it reads KGLTMRCVMWFSTCCWVIHN. A helical transmembrane segment spans residues 134–154; sequence FWAGSIGGTMIEGSFLLMNGL. The Cytoplasmic segment spans residues 155–183; it reads NIIRFWRMQKRGIDPFKVEKTPSAVDERG.

The protein localises to the cell inner membrane. This chain is Inner membrane protein YgjV (ygjV), found in Escherichia coli (strain K12).